The primary structure comprises 68 residues: Large ribosomal subunit protein uL29 (68 aa).

This sequence belongs to the universal ribosomal protein uL29 family.

The sequence is that of Large ribosomal subunit protein uL29 from Leuconostoc citreum (strain KM20).